The chain runs to 775 residues: Probable ubiquitin carboxyl-terminal hydrolase creB (775 aa).

The tract at residues 1-45 (MGSFLRSFRHNGGSTAPSVGAVPAKKEPQPPPMTPLEKRLLDMGP) is disordered. Residues 36–45 (LEKRLLDMGP) are compositionally biased toward basic and acidic residues. The USP domain occupies 55–468 (YGMENYGNTC…CAYVLFYQET (414 aa)). C64 (nucleophile) is an active-site residue. Disordered stretches follow at residues 113-146 (EAEA…DSPE) and 238-269 (ASKQ…KTPN). Over residues 256 to 269 (SVDQSSSTGSKTPN) the composition is skewed to polar residues. H419 functions as the Proton acceptor in the catalytic mechanism. The interval 496–775 (LKQNGFPQSP…LRKKSFSILS (280 aa)) is disordered. 2 stretches are compositionally biased toward low complexity: residues 546–566 (ESAP…SPLS) and 576–585 (ERVTTVATPP). Positions 586–653 (KNDALAKKER…ASKAEEDRRL (68 aa)) form a coiled coil. Residues 589–662 (ALAKKERARE…LSHENGKEKQ (74 aa)) are compositionally biased toward basic and acidic residues. The span at 668 to 679 (RLKRGSKSLSHR) shows a compositional bias: basic residues. A compositionally biased stretch (low complexity) spans 705 to 725 (SQTGPTSEQQQQQQQQQSPPN). The segment covering 739–757 (TIREDEQVNHKDSKHERTG) has biased composition (basic and acidic residues). Basic residues predominate over residues 758–775 (HGKWRSFSLRKKSFSILS).

Belongs to the peptidase C19 family. Interacts with creA, creC and qutD.

The enzyme catalyses Thiol-dependent hydrolysis of ester, thioester, amide, peptide and isopeptide bonds formed by the C-terminal Gly of ubiquitin (a 76-residue protein attached to proteins as an intracellular targeting signal).. In terms of biological role, ubiquitin thioesterase component of the regulatory network controlling carbon source utilization through ubiquitination and deubiquitination involving creA, creB, creC, creD and acrB. Deubiquitinates the creA catabolic repressor and the quinate permease qutD. Also plays a role in response to carbon starvation and the control of extracellular proteases activity. This is Probable ubiquitin carboxyl-terminal hydrolase creB (creB) from Aspergillus fumigatus (strain ATCC MYA-4609 / CBS 101355 / FGSC A1100 / Af293) (Neosartorya fumigata).